Here is a 221-residue protein sequence, read N- to C-terminus: 5-methylthioribulose-1-phosphate/5-deoxyribulose-1-phosphate aldolase (221 aa).

E75 (proton donor/acceptor) is an active-site residue. Co(2+) contacts are provided by E75, H94, H96, and H157.

It belongs to the aldolase class II family. Co(2+) serves as cofactor.

The enzyme catalyses 5-(methylsulfanyl)-D-ribulose 1-phosphate = 2-(methylsulfanyl)acetaldehyde + dihydroxyacetone phosphate. It carries out the reaction 5-deoxy-D-ribulose 1-phosphate = dihydroxyacetone phosphate + acetaldehyde. Its pathway is amino-acid biosynthesis; L-methionine biosynthesis via salvage pathway. Uses 5-methylthioribulose-1-phosphate to yield 2-(methylthio)acetaldehyde and dihydroxyacetone phosphate. Can also use 5-deoxyribulose 1-phosphate to yield acetaldehyde and dihydroxyacetone phosphate. Part of a bifunctional DHAP-shunt salvage pathway for SAM by-products. This chain is 5-methylthioribulose-1-phosphate/5-deoxyribulose-1-phosphate aldolase, found in Rhodospirillum rubrum (strain ATCC 11170 / ATH 1.1.1 / DSM 467 / LMG 4362 / NCIMB 8255 / S1).